The primary structure comprises 125 residues: MPTINQLVRKPRVSEVIKSKSPALENCPQRRGVCTRVYTTTPKKPNSALRKVAKVRLTNGFEVISYIGGEGHNLQEHSVVLIRGGRVKDLPGVRYHIVRGSLDLQGVKDRRQARSKYGAKRPKAA.

Residue aspartate 89 is modified to 3-methylthioaspartic acid.

It belongs to the universal ribosomal protein uS12 family. In terms of assembly, part of the 30S ribosomal subunit. Contacts proteins S8 and S17. May interact with IF1 in the 30S initiation complex.

Functionally, with S4 and S5 plays an important role in translational accuracy. Its function is as follows. Interacts with and stabilizes bases of the 16S rRNA that are involved in tRNA selection in the A site and with the mRNA backbone. Located at the interface of the 30S and 50S subunits, it traverses the body of the 30S subunit contacting proteins on the other side and probably holding the rRNA structure together. The combined cluster of proteins S8, S12 and S17 appears to hold together the shoulder and platform of the 30S subunit. This Cupriavidus metallidurans (strain ATCC 43123 / DSM 2839 / NBRC 102507 / CH34) (Ralstonia metallidurans) protein is Small ribosomal subunit protein uS12.